We begin with the raw amino-acid sequence, 130 residues long: Ribosome-binding factor A (130 aa).

Residues 111–130 (RDLDDVGPEATSSDEDAEQR) are disordered.

The protein belongs to the RbfA family. In terms of assembly, monomer. Binds 30S ribosomal subunits, but not 50S ribosomal subunits or 70S ribosomes.

Its subcellular location is the cytoplasm. Its function is as follows. One of several proteins that assist in the late maturation steps of the functional core of the 30S ribosomal subunit. Associates with free 30S ribosomal subunits (but not with 30S subunits that are part of 70S ribosomes or polysomes). Required for efficient processing of 16S rRNA. May interact with the 5'-terminal helix region of 16S rRNA. In Xanthomonas axonopodis pv. citri (strain 306), this protein is Ribosome-binding factor A.